The primary structure comprises 125 residues: MKEQTEIGKLKDGRYMVVDDQPCKILGINTSKPGKHGAAKARIDVVGIFDGVKRSIVQPVSAKTYVPIVERKAAQVLSISGDMAQLMDLKEFTNFEIKITDDKKNDVEVGKEVTYIESMGMRKLD.

Lys35 is modified (hypusine).

It belongs to the eIF-5A family.

It localises to the cytoplasm. Functions by promoting the formation of the first peptide bond. The protein is Translation initiation factor 5A (eIF5A) of Methanosphaerula palustris (strain ATCC BAA-1556 / DSM 19958 / E1-9c).